The primary structure comprises 184 residues: ATP synthase subunit b, chloroplastic (184 aa).

A helical membrane pass occupies residues 27–49 (LATNPINLSVVFGVLIFFGKGVL).

The protein belongs to the ATPase B chain family. As to quaternary structure, F-type ATPases have 2 components, F(1) - the catalytic core - and F(0) - the membrane proton channel. F(1) has five subunits: alpha(3), beta(3), gamma(1), delta(1), epsilon(1). F(0) has four main subunits: a(1), b(1), b'(1) and c(10-14). The alpha and beta chains form an alternating ring which encloses part of the gamma chain. F(1) is attached to F(0) by a central stalk formed by the gamma and epsilon chains, while a peripheral stalk is formed by the delta, b and b' chains.

The protein resides in the plastid. It localises to the chloroplast thylakoid membrane. Its function is as follows. F(1)F(0) ATP synthase produces ATP from ADP in the presence of a proton or sodium gradient. F-type ATPases consist of two structural domains, F(1) containing the extramembraneous catalytic core and F(0) containing the membrane proton channel, linked together by a central stalk and a peripheral stalk. During catalysis, ATP synthesis in the catalytic domain of F(1) is coupled via a rotary mechanism of the central stalk subunits to proton translocation. Functionally, component of the F(0) channel, it forms part of the peripheral stalk, linking F(1) to F(0). The polypeptide is ATP synthase subunit b, chloroplastic (Nasturtium officinale (Watercress)).